Reading from the N-terminus, the 161-residue chain is Putative outer membrane protein YedS (161 aa).

Positions 1-21 (MKRKVLAMLVPALLVAGAANA) are cleaved as a signal peptide.

It belongs to the Gram-negative porin family.

The protein resides in the cell outer membrane. The polypeptide is Putative outer membrane protein YedS (yedS) (Escherichia coli (strain K12)).